The sequence spans 507 residues: GMP synthase [glutamine-hydrolyzing] 1 (507 aa).

The region spanning 4–193 (KIIILDFGSQ…VVDVCGCKQD (190 aa)) is the Glutamine amidotransferase type-1 domain. The active-site Nucleophile is Cys79. Catalysis depends on residues His167 and Glu169. In terms of domain architecture, GMPS ATP-PPase spans 194 to 382 (WSPASFIEST…LGMPEHLITR (189 aa)). 221–227 (SGGVDSS) is a binding site for ATP.

Homodimer.

It catalyses the reaction XMP + L-glutamine + ATP + H2O = GMP + L-glutamate + AMP + diphosphate + 2 H(+). It participates in purine metabolism; GMP biosynthesis; GMP from XMP (L-Gln route): step 1/1. In terms of biological role, catalyzes the synthesis of GMP from XMP. The protein is GMP synthase [glutamine-hydrolyzing] 1 (guaA1) of Bacteroides thetaiotaomicron (strain ATCC 29148 / DSM 2079 / JCM 5827 / CCUG 10774 / NCTC 10582 / VPI-5482 / E50).